A 447-amino-acid chain; its full sequence is Methyl-coenzyme M reductase II subunit beta (447 aa).

Tyr-368 contacts coenzyme M. Coenzyme B is bound at residue Gly-370.

It belongs to the methyl-coenzyme M reductase beta subunit family. MCR is a hexamer of two alpha, two beta, and two gamma chains, forming a dimer of heterotrimers. It depends on coenzyme F430 as a cofactor.

The catalysed reaction is coenzyme B + methyl-coenzyme M = methane + coenzyme M-coenzyme B heterodisulfide. It functions in the pathway one-carbon metabolism; methyl-coenzyme M reduction; methane from methyl-coenzyme M: step 1/1. Functionally, component of the methyl-coenzyme M reductase (MCR) I that catalyzes the reductive cleavage of methyl-coenzyme M (CoM-S-CH3 or 2-(methylthio)ethanesulfonate) using coenzyme B (CoB or 7-mercaptoheptanoylthreonine phosphate) as reductant which results in the production of methane and the mixed heterodisulfide of CoB and CoM (CoM-S-S-CoB). This is the final step in methanogenesis. This chain is Methyl-coenzyme M reductase II subunit beta (mrtB), found in Methanocaldococcus jannaschii (strain ATCC 43067 / DSM 2661 / JAL-1 / JCM 10045 / NBRC 100440) (Methanococcus jannaschii).